A 391-amino-acid chain; its full sequence is GTPase Obg (391 aa).

One can recognise an Obg domain in the interval 1 to 159 (MKFVDEAVVK…REIRLELLLL (159 aa)). The OBG-type G domain maps to 160-333 (ADVGMLGLPN…LCYKLADFME (174 aa)). Residues 166-173 (GLPNAGKS), 191-195 (FTTLI), 213-216 (DIPG), 283-286 (NKTD), and 314-316 (SAI) contribute to the GTP site. Residues serine 173 and threonine 193 each contribute to the Mg(2+) site. Over residues 367 to 383 (TEEDDDDWDDCDDEDDD) the composition is skewed to acidic residues. The disordered stretch occupies residues 367–391 (TEEDDDDWDDCDDEDDDGHVVYVRD).

Belongs to the TRAFAC class OBG-HflX-like GTPase superfamily. OBG GTPase family. Monomer. Mg(2+) is required as a cofactor.

The protein resides in the cytoplasm. An essential GTPase which binds GTP, GDP and possibly (p)ppGpp with moderate affinity, with high nucleotide exchange rates and a fairly low GTP hydrolysis rate. Plays a role in control of the cell cycle, stress response, ribosome biogenesis and in those bacteria that undergo differentiation, in morphogenesis control. The protein is GTPase Obg of Vibrio campbellii (strain ATCC BAA-1116).